The primary structure comprises 133 residues: Large-conductance mechanosensitive channel (133 aa).

Helical transmembrane passes span 10-30 and 76-96; these read FAVK…AAFG and GIFV…FLVV.

The protein belongs to the MscL family. As to quaternary structure, homopentamer.

It localises to the cell inner membrane. Channel that opens in response to stretch forces in the membrane lipid bilayer. May participate in the regulation of osmotic pressure changes within the cell. This Chlorobium phaeobacteroides (strain BS1) protein is Large-conductance mechanosensitive channel.